Reading from the N-terminus, the 114-residue chain is Large ribosomal subunit protein eL31 (114 aa).

It belongs to the eukaryotic ribosomal protein eL31 family.

This chain is Large ribosomal subunit protein eL31 (RPL31), found in Eremothecium gossypii (strain ATCC 10895 / CBS 109.51 / FGSC 9923 / NRRL Y-1056) (Yeast).